A 360-amino-acid chain; its full sequence is Tubulin-like protein CetZ2 (360 aa).

GTP contacts are provided by residues Q10–K14, G65–G66, G106–G108, E138, N165, and N183. The segment covering E334–D354 has biased composition (basic and acidic residues). The disordered stretch occupies residues E334 to L360.

The protein belongs to the CetZ family.

The protein resides in the cytoplasm. In terms of biological role, involved in cell shape control. In Haloferax volcanii (strain ATCC 29605 / DSM 3757 / JCM 8879 / NBRC 14742 / NCIMB 2012 / VKM B-1768 / DS2) (Halobacterium volcanii), this protein is Tubulin-like protein CetZ2.